The primary structure comprises 367 residues: Germination protease (367 aa).

Residues M1–D15 constitute a propeptide that is removed on maturation.

Belongs to the peptidase A25 family. As to quaternary structure, homotetramer. Post-translationally, autoproteolytically processed. The inactive tetrameric zymogen termed p46 autoprocesses to a smaller form termed p41, which is active only during spore germination.

It carries out the reaction Endopeptidase action with P4 Glu or Asp, P1 preferably Glu &gt; Asp, P1' hydrophobic and P2' Ala.. Its function is as follows. Initiates the rapid degradation of small, acid-soluble proteins during spore germination. The protein is Germination protease of Bacillus mycoides (strain KBAB4) (Bacillus weihenstephanensis).